We begin with the raw amino-acid sequence, 59 residues long: Large ribosomal subunit protein uL30 (59 aa).

Belongs to the universal ribosomal protein uL30 family. Part of the 50S ribosomal subunit.

In Ruminiclostridium cellulolyticum (strain ATCC 35319 / DSM 5812 / JCM 6584 / H10) (Clostridium cellulolyticum), this protein is Large ribosomal subunit protein uL30.